The primary structure comprises 135 residues: uncharacterized protein (135 aa).

4 helical membrane passes run 4–24 (IIICIKLGVVFLGTLFTWIFG), 26–46 (WDMPIVTLLVFIFLDYLTGVI), 68–88 (LILVVLLVAVMLDRLLDNGAW), and 93–113 (LIAYFYIMNEGISILENCAAL).

This sequence belongs to the bacteriophage holin family. Cp-1 holin subfamily.

It is found in the cell membrane. This is an uncharacterized protein from Clostridium perfringens (strain 13 / Type A).